The following is a 388-amino-acid chain: Succinate--CoA ligase [ADP-forming] subunit beta (388 aa).

One can recognise an ATP-grasp domain in the interval 9-244 (KQLFAEYGLP…PSQEDSREAE (236 aa)). ATP-binding positions include lysine 46, 53–55 (GRG), glutamate 99, threonine 102, and glutamate 107. Mg(2+) contacts are provided by asparagine 199 and aspartate 213. Residues asparagine 264 and 321-323 (GIV) each bind substrate.

It belongs to the succinate/malate CoA ligase beta subunit family. As to quaternary structure, heterotetramer of two alpha and two beta subunits. Requires Mg(2+) as cofactor.

It carries out the reaction succinate + ATP + CoA = succinyl-CoA + ADP + phosphate. The catalysed reaction is GTP + succinate + CoA = succinyl-CoA + GDP + phosphate. It participates in carbohydrate metabolism; tricarboxylic acid cycle; succinate from succinyl-CoA (ligase route): step 1/1. In terms of biological role, succinyl-CoA synthetase functions in the citric acid cycle (TCA), coupling the hydrolysis of succinyl-CoA to the synthesis of either ATP or GTP and thus represents the only step of substrate-level phosphorylation in the TCA. The beta subunit provides nucleotide specificity of the enzyme and binds the substrate succinate, while the binding sites for coenzyme A and phosphate are found in the alpha subunit. The protein is Succinate--CoA ligase [ADP-forming] subunit beta of Marinobacter nauticus (strain ATCC 700491 / DSM 11845 / VT8) (Marinobacter aquaeolei).